A 481-amino-acid polypeptide reads, in one-letter code: MSDSIETKNMGRIVQIIGPVLDIVFAKGQVPNIYNALTIRAKNSAGTEMAVTCEVQQLLGDNCVRAVSMNPTEGLMRGMEVVDTGKPLSVPVGKVTLGRIFNVLGEPVDNMGNVKVEETLPIHRTAPAFVDLDTRLSIFETGIKVVDLLAPYRRGGKIGLFGGAGVGKTVLIMELINNIAKAHGGVSVFAGVGERTREGNDLYTEMKESGVIVEKNLSDSKVALVYGQMNEPPGARMRVALTALTMAEYFRDVNKQDVLFFIDNIFRFVQAGAEVSALLGRMPSAVGYQPTLATEMGGLQERITSTKDGSITSIQAVYVPADDLTDPAPATTFAHLDATTVLSRNLAAKGIYPAVDPLESTSTMLQPWILGEKHYDSAQSVKKTLQRYKELQDIIAILGLDELSEEDRLIVARARKIERFLSQPFFVAEVFTGSPGKYVSLAETIEGFGKIFAGELDDLPEQAFYLVGNITEAISKAASLK.

162–169 (GGAGVGKT) serves as a coordination point for ATP.

It belongs to the ATPase alpha/beta chains family. In terms of assembly, F-type ATPases have 2 components, F(1) - the catalytic core - and F(0) - the membrane proton channel. F(1) has five subunits: alpha(3), beta(3), gamma(1), delta(1), epsilon(1). F(0) has four main subunits: a(1), b(1), b'(1) and c(10-14). The alpha and beta chains form an alternating ring which encloses part of the gamma chain. F(1) is attached to F(0) by a central stalk formed by the gamma and epsilon chains, while a peripheral stalk is formed by the delta, b and b' chains.

The protein localises to the plastid. Its subcellular location is the chloroplast thylakoid membrane. It carries out the reaction ATP + H2O + 4 H(+)(in) = ADP + phosphate + 5 H(+)(out). Functionally, f(1)F(0) ATP synthase produces ATP from ADP in the presence of a proton or sodium gradient. F-type ATPases consist of two structural domains, F(1) containing the extramembraneous catalytic core and F(0) containing the membrane proton channel, linked together by a central stalk and a peripheral stalk. During catalysis, ATP synthesis in the catalytic domain of F(1) is coupled via a rotary mechanism of the central stalk subunits to proton translocation. Produces ATP from ADP in the presence of a proton gradient across the membrane. The catalytic sites are hosted primarily by the beta subunits. This is ATP synthase subunit beta, chloroplastic from Chlamydomonas reinhardtii (Chlamydomonas smithii).